A 20-amino-acid polypeptide reads, in one-letter code: Hemocyanin subunit Ia (20 aa).

The tract at residues 1–20 (ADXQPGDSTDKLLAQKQDDV) is disordered.

The protein belongs to the tyrosinase family. Hemocyanin subfamily. Composed of 3 major subunits (IB, II and III) and 1 minor subunit (IA) which form homohexamers and heterohexamers. May also form larger structures. As to expression, hemolymph.

The protein localises to the secreted. It is found in the extracellular space. In terms of biological role, hemocyanins are copper-containing oxygen carriers occurring freely dissolved in the hemolymph of many mollusks and arthropods. In Panulirus japonicus (Japanese spiny lobster), this protein is Hemocyanin subunit Ia.